The sequence spans 504 residues: Glycerol kinase (504 aa).

Residue Thr-14 participates in ADP binding. Residues Thr-14, Thr-15, and Ser-16 each contribute to the ATP site. Thr-14 is a binding site for sn-glycerol 3-phosphate. Residue Arg-18 participates in ADP binding. Sn-glycerol 3-phosphate contacts are provided by Arg-84, Glu-85, Tyr-136, and Asp-246. Glycerol-binding residues include Arg-84, Glu-85, Tyr-136, Asp-246, and Gln-247. The ADP site is built by Thr-268 and Gly-311. Thr-268, Gly-311, Gln-315, and Gly-412 together coordinate ATP. Positions 412 and 416 each coordinate ADP.

This sequence belongs to the FGGY kinase family.

The enzyme catalyses glycerol + ATP = sn-glycerol 3-phosphate + ADP + H(+). Its pathway is polyol metabolism; glycerol degradation via glycerol kinase pathway; sn-glycerol 3-phosphate from glycerol: step 1/1. Its activity is regulated as follows. Inhibited by fructose 1,6-bisphosphate (FBP). Its function is as follows. Key enzyme in the regulation of glycerol uptake and metabolism. Catalyzes the phosphorylation of glycerol to yield sn-glycerol 3-phosphate. This chain is Glycerol kinase, found in Aliivibrio fischeri (strain MJ11) (Vibrio fischeri).